Reading from the N-terminus, the 416-residue chain is Enterobactin exporter EntS (416 aa).

At 1–21 (MNKQSWLLNLSLLKTHPAFRA) the chain is on the cytoplasmic side. A helical membrane pass occupies residues 22–42 (VFLARFISIVSLGLLGVAVPV). Residues 43 to 55 (QIQIMTHSTWQVG) lie on the Periplasmic side of the membrane. Residues 56-76 (LSVTLTGGAMFVGLMVGGVLA) form a helical membrane-spanning segment. At 77–83 (DRYERKK) the chain is on the cytoplasmic side. The chain crosses the membrane as a helical span at residues 84–104 (VILLARGTCGIGFIGLCLNAL). The Periplasmic segment spans residues 105 to 109 (LPEPS). Residues 110–130 (LLAIYLLGLWDGFFASLGVTA) traverse the membrane as a helical segment. Over 131–156 (LLAATPALVGRENLMQAGAITMLTVR) the chain is Cytoplasmic. A helical transmembrane segment spans residues 157–177 (LGSVISPMIGGLLLATGGVAW). A topological domain (periplasmic) is located at residue Asn-178. The chain crosses the membrane as a helical span at residues 179-199 (YGLAAAGTFITLLPLLSLPAL). Topologically, residues 200–218 (PPPPQPREHPLKSLLAGFR) are cytoplasmic. A helical membrane pass occupies residues 219-239 (FLLASPLVGGIALLGGLLTMA). Over 240–256 (SAVRVLYPALADNWQMS) the chain is Periplasmic. A helical membrane pass occupies residues 257-277 (AAQIGFLYAAIPLGAAIGALT). The Cytoplasmic portion of the chain corresponds to 278–287 (SGKLAHSVRP). A helical transmembrane segment spans residues 288-307 (GLLMLLSTLGAFLAIGLFGL). Residues 308–313 (MPMWIL) lie on the Periplasmic side of the membrane. Residues 314-336 (GVVCLALFGWLSAVSSLLQYTML) traverse the membrane as a helical segment. Topologically, residues 337–356 (QTQTPEAMLGRINGLWTAQN) are cytoplasmic. The helical transmembrane segment at 357–377 (VTGDAIGAALLGGLGAMMTPV) threads the bilayer. Ala-378 is a topological domain (periplasmic). The chain crosses the membrane as a helical span at residues 379–399 (SASASGFGLLIIGVLLLLVLV). The Cytoplasmic portion of the chain corresponds to 400–416 (ELRRFRQTPPQVTASDS).

This sequence belongs to the major facilitator superfamily. EntS (TC 2.A.1.38) family.

Its subcellular location is the cell inner membrane. Functionally, component of an export pathway for enterobactin. The sequence is that of Enterobactin exporter EntS from Escherichia coli O127:H6 (strain E2348/69 / EPEC).